A 156-amino-acid polypeptide reads, in one-letter code: Small ribosomal subunit protein uS7 (156 aa).

It belongs to the universal ribosomal protein uS7 family. In terms of assembly, part of the 30S ribosomal subunit. Contacts proteins S9 and S11.

One of the primary rRNA binding proteins, it binds directly to 16S rRNA where it nucleates assembly of the head domain of the 30S subunit. Is located at the subunit interface close to the decoding center, probably blocks exit of the E-site tRNA. The chain is Small ribosomal subunit protein uS7 from Alkaliphilus metalliredigens (strain QYMF).